The chain runs to 639 residues: Synaptotagmin-16 (639 aa).

Over residues 95-119 (NSDLQDSVQTASPTLGQQAEDSSSV) the composition is skewed to polar residues. Residues 95 to 191 (NSDLQDSVQT…SSESDEDVTK (97 aa)) are disordered. A compositionally biased stretch (pro residues) spans 121–134 (PPWPSKIPGAPKPQ). The segment covering 142–151 (EEDHHSERQR) has biased composition (basic and acidic residues). Positions 174–187 (GDDEEPSTSSESDE) are enriched in acidic residues. The C2 1 domain occupies 344–463 (KCGDLDVIFE…HPEGEMKVTL (120 aa)). A disordered region spans residues 470–496 (NLSSGESPLSPSVVSHSDSASSTQSLS). The span at 476–496 (SPLSPSVVSHSDSASSTQSLS) shows a compositional bias: low complexity. Residues 499–634 (GVPELLVGLS…SKGQQTCRWH (136 aa)) form the C2 2 domain.

Belongs to the synaptotagmin family. As to quaternary structure, homodimer. Can also form heterodimers. As to expression, highly expressed in heart and testis. Moderately expressed in kidney.

Functionally, may be involved in the trafficking and exocytosis of secretory vesicles in non-neuronal tissues. Is Ca(2+)-independent. This chain is Synaptotagmin-16 (Syt16), found in Mus musculus (Mouse).